Here is a 413-residue protein sequence, read N- to C-terminus: Glutamate-1-semialdehyde 2,1-aminomutase (413 aa).

Residue lysine 260 is modified to N6-(pyridoxal phosphate)lysine.

The protein belongs to the class-III pyridoxal-phosphate-dependent aminotransferase family. HemL subfamily. Pyridoxal 5'-phosphate serves as cofactor.

It is found in the cytoplasm. It catalyses the reaction (S)-4-amino-5-oxopentanoate = 5-aminolevulinate. The protein operates within porphyrin-containing compound metabolism; protoporphyrin-IX biosynthesis; 5-aminolevulinate from L-glutamyl-tRNA(Glu): step 2/2. The chain is Glutamate-1-semialdehyde 2,1-aminomutase from Methanoregula boonei (strain DSM 21154 / JCM 14090 / 6A8).